A 491-amino-acid polypeptide reads, in one-letter code: Aspartyl/glutamyl-tRNA(Asn/Gln) amidotransferase subunit B (491 aa).

Belongs to the GatB/GatE family. GatB subfamily. As to quaternary structure, heterotrimer of A, B and C subunits.

The catalysed reaction is L-glutamyl-tRNA(Gln) + L-glutamine + ATP + H2O = L-glutaminyl-tRNA(Gln) + L-glutamate + ADP + phosphate + H(+). The enzyme catalyses L-aspartyl-tRNA(Asn) + L-glutamine + ATP + H2O = L-asparaginyl-tRNA(Asn) + L-glutamate + ADP + phosphate + 2 H(+). Functionally, allows the formation of correctly charged Asn-tRNA(Asn) or Gln-tRNA(Gln) through the transamidation of misacylated Asp-tRNA(Asn) or Glu-tRNA(Gln) in organisms which lack either or both of asparaginyl-tRNA or glutaminyl-tRNA synthetases. The reaction takes place in the presence of glutamine and ATP through an activated phospho-Asp-tRNA(Asn) or phospho-Glu-tRNA(Gln). This is Aspartyl/glutamyl-tRNA(Asn/Gln) amidotransferase subunit B from Burkholderia ambifaria (strain ATCC BAA-244 / DSM 16087 / CCUG 44356 / LMG 19182 / AMMD) (Burkholderia cepacia (strain AMMD)).